The chain runs to 1040 residues: Multidrug resistance protein MdtB (1040 aa).

A run of 12 helical transmembrane segments spans residues 25–45, 347–367, 369–389, 396–416, 440–460, 472–492, 537–557, 863–883, 888–908, 910–930, 968–988, and 998–1018; these read LLMAAILLAGIIGYRFLPVAA, LMLAIALVVMIIYLFLRNIPA, IIPGVAVPLSLIGTFAVMVFL, LTLMALTIATGFVVDDAIVVI, IGFTIISLTFSLIAVLIPLLF, FAVTLAVAILISAVVSLTLTP, WLTLSVAFATLLLSVMLWIVI, LGSTVWLIVAAVVAMYIVLGV, FIHPITILSTLPTAGVGALLA, IIAGSELDIIAIIGIILLIGI, ILMTTLAALLGALPLMLSTGV, and IAMVGGLLVSQVLTLFTTPVI.

It belongs to the resistance-nodulation-cell division (RND) (TC 2.A.6) family. MdtB subfamily. Part of a tripartite efflux system composed of MdtA, MdtB and MdtC. MdtB forms a heteromultimer with MdtC.

It is found in the cell inner membrane. The chain is Multidrug resistance protein MdtB from Salmonella choleraesuis (strain SC-B67).